We begin with the raw amino-acid sequence, 77 residues long: Phytosulfokines 5 (77 aa).

Positions 1–24 (MVKFTTFLCIIALLLCSTLTHASA) are cleaved as a signal peptide. The propeptide occupies 25–68 (RLNPTSVYPEENSFKKLEQGEVICEGVGEEECFLIRRTLVAHTD). A sulfotyrosine mark is found at tyrosine 69 and tyrosine 71. Positions 74–77 (NHNP) are excised as a propeptide.

Belongs to the phytosulfokine family. Post-translationally, sulfation is important for activity and for the binding to a putative membrane receptor. In terms of processing, PSK-beta is an enzymatic derivative of PSK-alpha. In terms of tissue distribution, expressed in stems, roots, mature leaves and flowers. Most abundant in vascular bundles.

It localises to the secreted. In terms of biological role, promotes plant cell differentiation, organogenesis and somatic embryogenesis as well as cell proliferation. May be involved in the low quiescent center cell proliferation. This Arabidopsis thaliana (Mouse-ear cress) protein is Phytosulfokines 5 (PSK5).